A 901-amino-acid polypeptide reads, in one-letter code: Protein translocase subunit SecA (901 aa).

ATP contacts are provided by residues Gln87, 105-109 (GEGKT), and Asp512. Zn(2+) contacts are provided by Cys885, Cys887, Cys896, and His897.

The protein belongs to the SecA family. In terms of assembly, monomer and homodimer. Part of the essential Sec protein translocation apparatus which comprises SecA, SecYEG and auxiliary proteins SecDF-YajC and YidC. Zn(2+) is required as a cofactor.

Its subcellular location is the cell inner membrane. It is found in the cytoplasm. It catalyses the reaction ATP + H2O + cellular proteinSide 1 = ADP + phosphate + cellular proteinSide 2.. Its function is as follows. Part of the Sec protein translocase complex. Interacts with the SecYEG preprotein conducting channel. Has a central role in coupling the hydrolysis of ATP to the transfer of proteins into and across the cell membrane, serving both as a receptor for the preprotein-SecB complex and as an ATP-driven molecular motor driving the stepwise translocation of polypeptide chains across the membrane. The polypeptide is Protein translocase subunit SecA (Salmonella arizonae (strain ATCC BAA-731 / CDC346-86 / RSK2980)).